The sequence spans 73 residues: Structural DNA-binding protein p10 (73 aa).

The tract at residues 1–35 (MPTKAGTKSTAHKKTTTKGPSKSPKGKTHATALHQ) is disordered.

This sequence belongs to the asfivirus P10 family.

Its subcellular location is the virion. May play a role in genome packaging through direct interaction with viral DNA. Binds to ssDNA and dsDNA with the same apparent affinity in vitro. This African swine fever virus (isolate Tick/Malawi/Lil 20-1/1983) (ASFV) protein is Structural DNA-binding protein p10.